Here is a 306-residue protein sequence, read N- to C-terminus: Mitochondrial brown fat uncoupling protein 1 (306 aa).

Topologically, residues 1 to 10 (MVGTTTTDVP) are mitochondrial intermembrane. A helical membrane pass occupies residues 11–32 (PTMGVKIFSAGVAACLADVITF). Solcar repeat units follow at residues 11–102 (PTMG…VQEF), 110–200 (PSLG…MKGA), and 209–294 (DDVP…LKGE). The Mitochondrial matrix segment spans residues 33–73 (PLDTAKVRQQIQGEFPITSGIRYKGVLGTITTLAKTEGPLK). Residue Lys56 coordinates fatty acid 16:0. The chain crosses the membrane as a helical span at residues 74–96 (LYSGLPAGLQRQISFASLRIGLY). Over 97–115 (DTVQEFFTSGEETPSLGSK) the chain is Mitochondrial intermembrane. The chain crosses the membrane as a helical span at residues 116 to 132 (ISAGLTTGGVAVFIGQP). Residues 133–177 (TEVVKVRLQAQSHLHGLKPRYTGTYNAYRIIATTESLTSLWKGTT) lie on the Mitochondrial matrix side of the membrane. A helical membrane pass occupies residues 178 to 194 (PNLLRNVIINCTELVTY). At 195 to 211 (DLMKGALVRNEILADDV) the chain is on the mitochondrial intermembrane side. Residues 212-231 (PCHFVSALIAGFCTTLLSSP) traverse the membrane as a helical segment. The Mitochondrial matrix segment spans residues 232–265 (VDVVKTRFINSPPGQYASVPNCAMTMFTKEGPTA). The residue at position 253 (Cys253) is a Cysteine sulfenic acid (-SOH). A helical membrane pass occupies residues 266–288 (FFKGFVPSFLRLGSWNVIMFVCF). Lys268 serves as a coordination point for fatty acid 16:0. Over 289 to 306 (EKLKGELMRSRQTVDCAT) the chain is Mitochondrial intermembrane.

Belongs to the mitochondrial carrier (TC 2.A.29) family. Most probably functions as a monomer. Binds one purine nucleotide per monomer. However, has also been suggested to function as a homodimer or a homotetramer. Tightly associates with cardiolipin in the mitochondrion inner membrane; may stabilize and regulate its activity. May undergo sulfenylation upon cold exposure. May increase the sensitivity of UCP1 thermogenic function to the activation by noradrenaline probably through structural effects. In terms of processing, may undergo ubiquitin-mediated proteasomal degradation. Brown adipose tissue.

It is found in the mitochondrion inner membrane. It catalyses the reaction H(+)(in) = H(+)(out). With respect to regulation, has no constitutive proton transporter activity and has to be activated by long-chain fatty acids/LCFAs. Inhibited by purine nucleotides. Both purine nucleotides and LCFAs bind the cytosolic side of the transporter and directly compete to activate or inhibit it. Activated by noradrenaline and reactive oxygen species. Despite lacking canonical translational encoding for selenocysteine, a small pool of the protein has been observed to selectively incorporate selenocysteine at 'Cys-253'. Selenocysteine-modified protein is highly sensitive to redox modification and may constitute a pool of protein highly sensitive to activation by elevated levels of reactive oxygen species (ROS). Mitochondrial protein responsible for thermogenic respiration, a specialized capacity of brown adipose tissue and beige fat that participates in non-shivering adaptive thermogenesis to temperature and diet variations and more generally to the regulation of energy balance. Functions as a long-chain fatty acid/LCFA and proton symporter, simultaneously transporting one LCFA and one proton through the inner mitochondrial membrane. However, LCFAs remaining associated with the transporter via their hydrophobic tails, it results in an apparent transport of protons activated by LCFAs. Thereby, dissipates the mitochondrial proton gradient and converts the energy of substrate oxydation into heat instead of ATP. Regulates the production of reactive oxygen species/ROS by mitochondria. This Oryctolagus cuniculus (Rabbit) protein is Mitochondrial brown fat uncoupling protein 1.